A 105-amino-acid polypeptide reads, in one-letter code: Large ribosomal subunit protein bL21 (105 aa).

Belongs to the bacterial ribosomal protein bL21 family. Part of the 50S ribosomal subunit. Contacts protein L20.

Its function is as follows. This protein binds to 23S rRNA in the presence of protein L20. The protein is Large ribosomal subunit protein bL21 of Aliarcobacter butzleri (strain RM4018) (Arcobacter butzleri).